Consider the following 224-residue polypeptide: Heme response regulator HssR (224 aa).

The Response regulatory domain maps to 3–116 (KCLIVDDDYK…ELLFRIQAVL (114 aa)). 4-aspartylphosphate is present on Asp-52. A DNA-binding region (ompR/PhoB-type) is located at residues 124-222 (QDIIKLGNVT…VRGQGYRVIT (99 aa)).

Phosphorylated by HssS.

It localises to the cytoplasm. Functionally, member of the two-component regulatory system HssS/HssR involved in intracellular heme homeostasis and tempering of staphylococcal virulence. Phosphorylated HssR binds to a direct repeat sequence within hrtAB promoter and activates the expression of hrtAB, an efflux pump, in response to extracellular heme, hemin, hemoglobin or blood. The sequence is that of Heme response regulator HssR (hssR) from Staphylococcus haemolyticus (strain JCSC1435).